The chain runs to 92 residues: uncharacterized protein (92 aa).

Residues 24 to 89 enclose the HMA domain; the sequence is KQIVLKVKEM…AIHKLKYTAE (66 aa). 2 residues coordinate a metal cation: Cys35 and Cys38.

This is an uncharacterized protein from Haemophilus influenzae (strain ATCC 51907 / DSM 11121 / KW20 / Rd).